The chain runs to 671 residues: MQNFDLIKQKIKSLVKQLTKANYQYYNLSNPDLSDQQYDALLKELINLETRYPQFKLPYSPTLKIGGFVEKKFSTIKHKTPMMSLGNVFNLEEIKAFYDRIVKKIPTFSLLTELKIDGVAISLKYQKGILVQALTRGNGIWGEDITKNAQTIKTIPLRLKEDLDLEVRGEIYLSHPAFEKLNAQRKQENKPLFSNPRNAASGTLRQLNSAIVAQRNLSIFVYGISDPYLTKPTQKETLVFLTALGFTTNPHYYCVSNFENLLSVIEKYKTIKEQLTYDTDGIVIKINELAFHSLIGATAKAPRWATAYKFATITSQSIVQNIIFQVGRTGVITPVCKIMPVMVDGSLVSKVVLHNYDYICKKDIRIKDHVIVHKAGSVIPEILEVIKSKRTDLQKPTLMIEKCPACQTILEKQPGEVDYFCLNPNCREQKIQKLIHFVSKNAMDINVLGEQTIIAFFDKNLIAKPSDLYLLKKHKHILQEMPGFGAKKITNILDAIEASKQKGFEDVLFALGIKHIGKKVSQVLAKHFQTIENLQQATPELITQIREIGIKIAQSIQQYFSNSCNLEEVSKLKTLGVSFQSTNPQNPTTQTIFTNKKIVLTGTLQKYSRLQIQQILEQMGAIITNSLSLQNNYLIVGINAGSKLTKAQKLQIPIIEEKELQQIIENSQIKL.

NAD(+) contacts are provided by residues 35 to 39, 84 to 85, and Glu-113; these read DQQYD and SL. Lys-115 functions as the N6-AMP-lysine intermediate in the catalytic mechanism. The NAD(+) site is built by Arg-136, Glu-170, Lys-285, and Lys-309. Residues Cys-403, Cys-406, Cys-421, and Cys-426 each contribute to the Zn(2+) site. The BRCT domain occupies 588 to 671; sequence TTQTIFTNKK…QIIENSQIKL (84 aa).

The protein belongs to the NAD-dependent DNA ligase family. LigA subfamily. The cofactor is Mg(2+). Requires Mn(2+) as cofactor.

It catalyses the reaction NAD(+) + (deoxyribonucleotide)n-3'-hydroxyl + 5'-phospho-(deoxyribonucleotide)m = (deoxyribonucleotide)n+m + AMP + beta-nicotinamide D-nucleotide.. Its function is as follows. DNA ligase that catalyzes the formation of phosphodiester linkages between 5'-phosphoryl and 3'-hydroxyl groups in double-stranded DNA using NAD as a coenzyme and as the energy source for the reaction. It is essential for DNA replication and repair of damaged DNA. The sequence is that of DNA ligase from Onion yellows phytoplasma (strain OY-M).